Consider the following 727-residue polypeptide: NADH-ubiquinone oxidoreductase 75 kDa subunit, mitochondrial (727 aa).

A mitochondrion-targeting transit peptide spans 1-23 (MLRIPVRKALVGLSKSPKGCVRT). The 2Fe-2S ferredoxin-type domain occupies 30 to 108 (NLIEVFVDGQ…GWNILTNSEK (79 aa)). 3 residues coordinate [2Fe-2S] cluster: cysteine 64, cysteine 75, and cysteine 78. Lysine 84 is subject to N6-acetyllysine. Position 92 (cysteine 92) interacts with [2Fe-2S] cluster. The 40-residue stretch at 108–147 (KSKKAREGVMEFLLANHPLDCPICDQGGECDLQDQSMMFG) folds into the 4Fe-4S His(Cys)3-ligated-type domain. Residues histidine 124, cysteine 128, cysteine 131, cysteine 137, cysteine 176, cysteine 179, cysteine 182, and cysteine 226 each contribute to the [4Fe-4S] cluster site. The region spanning 245 to 301 (TRKTESIDVMDAVGSNIVVSTRTGEVMRILPRMHEDINEEWISDKTRFAYDGLKRQR) is the 4Fe-4S Mo/W bis-MGD-type domain. N6-acetyllysine occurs at positions 467, 499, and 709.

The protein belongs to the complex I 75 kDa subunit family. As to quaternary structure, core subunit of respiratory chain NADH dehydrogenase (Complex I) which is composed of 45 different subunits. This is the largest subunit of complex I and it is a component of the iron-sulfur (IP) fragment of the enzyme. Complex I associates with ubiquinol-cytochrome reductase complex (Complex III) to form supercomplexes. Interacts with MDM2 and AKAP1. [2Fe-2S] cluster is required as a cofactor. [4Fe-4S] cluster serves as cofactor.

Its subcellular location is the mitochondrion inner membrane. The enzyme catalyses a ubiquinone + NADH + 5 H(+)(in) = a ubiquinol + NAD(+) + 4 H(+)(out). Core subunit of the mitochondrial membrane respiratory chain NADH dehydrogenase (Complex I) which catalyzes electron transfer from NADH through the respiratory chain, using ubiquinone as an electron acceptor. Essential for catalysing the entry and efficient transfer of electrons within complex I. Plays a key role in the assembly and stability of complex I and participates in the association of complex I with ubiquinol-cytochrome reductase complex (Complex III) to form supercomplexes. The chain is NADH-ubiquinone oxidoreductase 75 kDa subunit, mitochondrial (NDUFS1) from Macaca fascicularis (Crab-eating macaque).